Reading from the N-terminus, the 388-residue chain is RKLKTGTASVAVALTVVGAGLASQTEVKANRADDARNEVLRGNLVRAELWYRQIQENDQLKLENKGLKTDLREKEEELQGLKDDVEKLTADAELQRLKNERHEEAELERLKSERHDHDKKEAERKALEDKLADKQEHLNGALRYINEKEAEAKEKEAEQKKLKEEKQISDASRQGLRRDLDASREAKKQVEKDLANLTAELDKVKEEKQISDASRQGLRRDLDASREAKKQVEKGLANLTAELDKVKEEKQISDASRQGLRRDLDASREAKKQVEKALEEANSKLAALEKLNKELEESKKLTEKEKAELQAKLEAEAKALKEQLAKQAEELAKLRAEKASDSQTPDAKPGNKAVPGKGQAPQAGTKPNQNKAPMKETKRQLPSTGETT.

The N-terminal stretch at 1–29 is a signal peptide; the sequence is RKLKTGTASVAVALTVVGAGLASQTEVKA. Residues 85 to 113 are able to bind plasminogen; sequence VEKLTADAELQRLKNERHEEAELERLKSE. The A-1 repeat unit spans residues 91 to 103; sequence DAELQRLKNERHE. The 2 X approximate tandem repeats, type a stretch occupies residues 91–116; the sequence is DAELQRLKNERHEEAELERLKSERHD. 5 stretches are compositionally biased toward basic and acidic residues: residues 95-137, 145-168, 176-189, 218-231, and 260-269; these read QRLK…KQEH, INEKEAEAKEKEAEQKKLKEEKQI, LRRDLDASREAKKQ, and LRRDLDASRE. Disordered regions lie at residues 95–189, 204–231, and 248–269; these read QRLK…AKKQ, VKEEKQISDASRQGLRRDLDASREAKKQ, and EEKQISDASRQGLRRDLDASRE. Residues 104–116 form an A-2 repeat; the sequence is EAELERLKSERHD. A B-1 repeat occupies 147-153; that stretch reads EKEAEAK. Residues 147-161 are 2 X tandem repeats, type b; sequence EKEAEAKEKEAEQKK. The stretch at 154–159 is one B-2 repeat; sequence EKEAEQ. C repeat units follow at residues 160 to 194, 202 to 236, and 244 to 278; these read KKLKEEKQISDASRQGLRRDLDASREAKKQVEKDL, DKVKEEKQISDASRQGLRRDLDASREAKKQVEKGL, and DKVKEEKQISDASRQGLRRDLDASREAKKQVEKAL. D repeat units lie at residues 311 to 316, 317 to 322, 325 to 330, and 332 to 337; these read AKLEAE, AKALKE, AKQAEE, and AKLRAE. Residues 331 to 340 are compositionally biased toward basic and acidic residues; that stretch reads LAKLRAEKAS. The interval 331 to 388 is disordered; sequence LAKLRAEKASDSQTPDAKPGNKAVPGKGQAPQAGTKPNQNKAPMKETKRQLPSTGETT. Positions 381 to 385 match the LPXTG sorting signal motif; it reads LPSTG. The residue at position 384 (threonine 384) is a Pentaglycyl murein peptidoglycan amidated threonine. A propeptide spans 385–388 (removed by sortase); sequence GETT.

It belongs to the M protein family.

It is found in the secreted. Its subcellular location is the cell wall. Binds to human plasminogen (and plasmin) via its kringle repeats. Also binds to albumin, immunoglobulin G and fibrinogen. Could provide the bacteria with a mechanism for invasion, as streptococcal-bound plasmin could permit tissue penetration. In Streptococcus pyogenes, this protein is Plasminogen-binding group A streptococcal M-like protein PAM (pam).